Consider the following 224-residue polypeptide: Urease accessory protein UreF (224 aa).

The protein belongs to the UreF family. UreD, UreF and UreG form a complex that acts as a GTP-hydrolysis-dependent molecular chaperone, activating the urease apoprotein by helping to assemble the nickel containing metallocenter of UreC. The UreE protein probably delivers the nickel.

The protein localises to the cytoplasm. In terms of biological role, required for maturation of urease via the functional incorporation of the urease nickel metallocenter. This Pseudomonas savastanoi pv. phaseolicola (strain 1448A / Race 6) (Pseudomonas syringae pv. phaseolicola (strain 1448A / Race 6)) protein is Urease accessory protein UreF.